A 297-amino-acid polypeptide reads, in one-letter code: Putative S-adenosyl-L-methionine-dependent methyltransferase MSMEG_0614/MSMEI_0598 (297 aa).

Residues Asp125 and 154–155 (DL) each bind S-adenosyl-L-methionine.

It belongs to the UPF0677 family.

Its function is as follows. Exhibits S-adenosyl-L-methionine-dependent methyltransferase activity. This is Putative S-adenosyl-L-methionine-dependent methyltransferase MSMEG_0614/MSMEI_0598 from Mycolicibacterium smegmatis (strain ATCC 700084 / mc(2)155) (Mycobacterium smegmatis).